A 246-amino-acid polypeptide reads, in one-letter code: PARP-type zinc finger-containing protein C2A9.07c (246 aa).

The segment at 8–99 (YRVELAKTGR…EKILRAFEQG (92 aa)) adopts a PARP-type; degenerate zinc-finger fold. Positions 103–126 (EEDEERCRKMASDASEEKDRKIEE) are enriched in basic and acidic residues. Positions 103-246 (EEDEERCRKM…ESGNEYSDSD (144 aa)) are disordered. Thr-130 carries the post-translational modification Phosphothreonine. At Ser-131 the chain carries Phosphoserine. The segment covering 157–168 (NKKHKAERKRSP) has biased composition (basic residues). Over residues 175 to 184 (LEDDEEIEDV) the composition is skewed to acidic residues. A compositionally biased stretch (basic and acidic residues) spans 185 to 196 (ASDKDEEEKPWS). The segment covering 197–215 (GDEEDDDELVVKDSEDETE) has biased composition (acidic residues). 2 positions are modified to phosphoserine: Ser-243 and Ser-245.

The protein resides in the nucleus. It localises to the mitochondrion. The polypeptide is PARP-type zinc finger-containing protein C2A9.07c (Schizosaccharomyces pombe (strain 972 / ATCC 24843) (Fission yeast)).